Consider the following 265-residue polypeptide: Cell division protein DivIB (265 aa).

The Cytoplasmic portion of the chain corresponds to 1 to 33 (MRMELKMMGNVNKSNKTNEYILRRHKKKRKKKL). The helical transmembrane segment at 34–54 (IIFSILLISILVTLCFKHPFF) threads the bilayer. The region spanning 54 to 122 (FNVKIVEVKD…NKIVIHIKER (69 aa)) is the POTRA domain. Residues 55-265 (NVKIVEVKDN…FKGNPVVFIK (211 aa)) lie on the Extracellular side of the membrane.

It belongs to the FtsQ/DivIB family. DivIB subfamily.

Its subcellular location is the cell membrane. Cell division protein that may be involved in stabilizing or promoting the assembly of the division complex. This is Cell division protein DivIB from Clostridium tetani (strain Massachusetts / E88).